Reading from the N-terminus, the 84-residue chain is Insulin-like peptide 05 (84 aa).

The N-terminal stretch at methionine 1–glycine 22 is a signal peptide. A propeptide spanning residues phenylalanine 23–arginine 37 is cleaved from the precursor. 3 disulfide bridges follow: cysteine 43–cysteine 48, cysteine 44–cysteine 73, and cysteine 57–cysteine 61.

Belongs to the insulin family.

It is found in the secreted. Insulin decreases blood glucose concentration. May have evolved to activate insulin receptors (INSR) in vertebrates. Molecular docking studies reveals unique interaction with the human insulin receptor. In vivo, insulin-like peptide injection reduces blood glucose levels in two models of zebrafish diabetes (streptozotocin- and glucose-induced). Also shorter swimming distance of zebrafish larvae, an effect which is not observed with human insulin. The sequence is that of Insulin-like peptide 05 from Exaiptasia diaphana (Tropical sea anemone).